A 448-amino-acid polypeptide reads, in one-letter code: Gamete and mating-type specific protein A (448 aa).

The first 19 residues, 1–19 (MKLILVLLCLISTLFVVKG), serve as a signal peptide directing secretion. The SCP domain maps to 30 to 157 (VSYHNKWRSS…PDKSEVSCSY (128 aa)). 3 N-linked (GlcNAc...) asparagine glycosylation sites follow: Asn55, Asn98, and Asn119. The interval 171–242 (PKTTTPAPTT…PTTPAPTSTL (72 aa)) is disordered. Positions 178–236 (PTTPAPTTPKPTTPAPTTPKPTTPAPTTPKPTTPAPTTPKPTTPAPTTPKPTTPAPTTP) are enriched in pro residues. Catalysis depends on residues Cys262, His397, and Asn415.

The protein belongs to the peptidase C1 family.

It is found in the secreted. Its function is as follows. Thiol protease that seems to be involved in the sexual development. The chain is Gamete and mating-type specific protein A (gmsA) from Dictyostelium discoideum (Social amoeba).